Here is a 153-residue protein sequence, read N- to C-terminus: MAVESRVTQEEIKKEPEKPIDREKTCPLLLRVFTTNNGRHHRMDEFSRGNVPSSELQIYTWMDATLKELTSLVKEVYPEARKKGTHFNFAIVFMDLKRPGYRVKEIGSTMSGRKGTDDSMTLQSQKFQIGDYLDIAITPPNRAPPSSGRMRPY.

Positions 1–20 are disordered; sequence MAVESRVTQEEIKKEPEKPI. An N-acetylalanine modification is found at Ala-2. Basic and acidic residues predominate over residues 7–20; sequence VTQEEIKKEPEKPI. Lys-13 participates in a covalent cross-link: Glycyl lysine isopeptide (Lys-Gly) (interchain with G-Cter in SUMO2). The tract at residues 93–153 is involved in splicing regulation activity; that stretch reads FMDLKRPGYR…PPSSGRMRPY (61 aa).

Belongs to the SAP18 family. As to quaternary structure, found in a mRNA splicing-dependent exon junction complex (EJC). Component of the heterotrimeric ASAP (apoptosis- and splicing-associated protein) and PSAP complexes consisting of RNPS1, SAP18 and either ACIN1 or PNN, respectively; the ASAP and PSAP complexes probably are formed mutually exclusive. For the ASAP complex, the association of SAP18 seems to require a preformed RNPS1:ACIN1 complex. Forms a complex with SIN3A and HDAC1. Interacts with SUFU. In terms of tissue distribution, expressed in all tissues tested; highest levels in the brain, kidney and muscle; lowest levels in lung spleen, liver, intestine and testis, and moderate levels in salivary gland and heart.

The protein resides in the nucleus. It is found in the cytoplasm. The protein localises to the nucleus speckle. Functionally, component of the SIN3-repressing complex. Enhances the ability of SIN3-HDAC1-mediated transcriptional repression. When tethered to the promoter, it can direct the formation of a repressive complex to core histone proteins. Auxiliary component of the splicing-dependent multiprotein exon junction complex (EJC) deposited at splice junction on mRNAs. The EJC is a dynamic structure consisting of core proteins and several peripheral nuclear and cytoplasmic associated factors that join the complex only transiently either during EJC assembly or during subsequent mRNA metabolism. Component of the ASAP and PSAP complexes which bind RNA in a sequence-independent manner and are proposed to be recruited to the EJC prior to or during the splicing process and to regulate specific excision of introns in specific transcription subsets. The ASAP complex can inhibit mRNA processing during in vitro splicing reactions. The ASAP complex promotes apoptosis and is disassembled after induction of apoptosis. Involved in the splicing modulation of BCL2L1/Bcl-X (and probably other apoptotic genes); specifically inhibits the formation of proapoptotic isoforms such as Bcl-X(S); the activity is different from the established EJC assembly and function. This Mus musculus (Mouse) protein is Histone deacetylase complex subunit SAP18 (Sap18).